The chain runs to 396 residues: Elongation factor Tu (396 aa).

In terms of domain architecture, tr-type G spans 10–205 (KPHVNIGTIG…ACDDNIPDPV (196 aa)). The segment at 19 to 26 (GHVDHGKT) is G1. Position 19–26 (19–26 (GHVDHGKT)) interacts with GTP. Thr-26 is a Mg(2+) binding site. Residues 62–66 (GITIN) are G2. Residues 83 to 86 (DAPG) are G3. GTP-binding positions include 83–87 (DAPGH) and 138–141 (NKCD). Positions 138–141 (NKCD) are G4. Residues 175–177 (SAL) are G5.

The protein belongs to the TRAFAC class translation factor GTPase superfamily. Classic translation factor GTPase family. EF-Tu/EF-1A subfamily. As to quaternary structure, monomer.

It localises to the cytoplasm. The catalysed reaction is GTP + H2O = GDP + phosphate + H(+). GTP hydrolase that promotes the GTP-dependent binding of aminoacyl-tRNA to the A-site of ribosomes during protein biosynthesis. The protein is Elongation factor Tu of Corynebacterium glutamicum (strain ATCC 13032 / DSM 20300 / JCM 1318 / BCRC 11384 / CCUG 27702 / LMG 3730 / NBRC 12168 / NCIMB 10025 / NRRL B-2784 / 534).